The following is a 344-amino-acid chain: Acyl-CoA ligase clz12 (344 aa).

2 AMP-binding regions span residues 2-239 (VQRS…IIKV) and 248-322 (ELET…PSGK).

Belongs to the ATP-dependent AMP-binding enzyme family.

It participates in secondary metabolite biosynthesis. Its function is as follows. Acyl-CoA ligase; part of the gene cluster that mediates the biosynthesis of squalestatin S1 (SQS1, also known as zaragozic acid A), a heavily oxidized fungal polyketide that offers potent cholesterol lowering activity by targeting squalene synthase (SS). SQS1 is composed of a 2,8-dioxobicyclic[3.2.1]octane-3,4,5-tricarboxyclic acid core that is connected to two lipophilic polyketide arms. These initial steps feature the priming of an unusual benzoic acid starter unit onto the highly reducing polyketide synthase clz14, followed by oxaloacetate extension and product release to generate a tricarboxylic acid containing product. The phenylalanine ammonia lyase (PAL) clz10 and the acyl-CoA ligase clz12 are involved in transforming phenylalanine into benzoyl-CoA. The citrate synthase-like protein clz17 is involved in connecting the C-alpha-carbons of the hexaketide chain and oxaloacetate to afford the tricarboxylic acid unit. The potential hydrolytic enzymes, clz11 and clz13, are in close proximity to pks2 and may participate in product release. On the other side, the tetraketide arm is synthesized by a the squalestatin tetraketide synthase clz2 and enzymatically esterified to the core in the last biosynthetic step, by the acetyltransferase clz6. The biosynthesis of the tetraketide must involve 3 rounds of chain extension. After the first and second rounds methyl-transfer occurs, and in all rounds of extension the ketoreductase and dehydratase are active. The enoyl reductase and C-MeT of clz2 are not active in the final round of extension. The acetyltransferase clz6 appears to have a broad substrate selectivity for its acyl CoA substrate, allowing the in vitro synthesis of novel squalestatins. The biosynthesis of SQS1 requires several oxidative steps likely performed by oxidoreductases clz3, clz15 and clz16. Finally, in support of the identification of the cluster as being responsible for SQS1 production, the cluster contains a gene encoding a putative squalene synthase (SS) clz20, suggesting a likely mechanism for self-resistance. The protein is Acyl-CoA ligase clz12 of Cochliobolus lunatus (Filamentous fungus).